The following is a 389-amino-acid chain: Multidrug resistance protein 1 (389 aa).

11 helical membrane-spanning segments follow: residues 6–26 (ITLTILLTNLFIAFLGIGLVI), 42–62 (AVGYMVACFAITQLIVSPIAG), 71–91 (KIMIVIGLLFFSVSEFLFGIG), 102–122 (MLGGISAAFIMPGVTAFIADI), 134–154 (YMSAAISTGFIIGPGIGGFLA), 160–180 (LPFFFAAAFALLAAILSILTL), 202–222 (IFAPMYFIAFLIILISSFGLA), 243–263 (IAIMITGGAIVGAITQVVLFD), 286–306 (VFLLTTVHSYVAILLVTVTVF), 336–356 (SMFTSIGNVFGPIIGGMLFDI), and 358–378 (VNYPFYFATVTLAIGIALTIA).

This sequence belongs to the major facilitator superfamily. TCR/Tet family.

Its subcellular location is the cell membrane. Energy-dependent efflux pump responsible for decreased drug accumulation in multi-drug-resistant cells. Probably uses a transmembrane proton gradient as the energy source. Causes the efflux of a variety of toxic substances, including such structurally diverse compounds as ethidium bromide, rhodamine and acridine dyes, tetraphenylphosphonium, puromycin, chloramphenicol, doxorubicin, and fluoroquinolone antibiotics. The sequence is that of Multidrug resistance protein 1 (bmr) from Bacillus subtilis (strain 168).